A 603-amino-acid polypeptide reads, in one-letter code: Sulfoacetaldehyde acetyltransferase (603 aa).

The protein belongs to the TPP enzyme family. Mg(2+) is required as a cofactor. Thiamine diphosphate serves as cofactor.

It catalyses the reaction acetyl phosphate + sulfite + H(+) = sulfoacetaldehyde + phosphate. Catalyzes the degradation of sulfoacetaldehyde into sulfite and acetyl phosphate. Involved in sulfolactate degradation. The protein is Sulfoacetaldehyde acetyltransferase of Roseovarius nubinhibens (strain ATCC BAA-591 / DSM 15170 / ISM).